The sequence spans 273 residues: SUMO-1 cysteine protease S273R (273 aa).

Active-site residues include His168 and Asn187. Gln226 is a binding site for substrate. The Nucleophile role is filled by Cys232.

Belongs to the peptidase C63 family.

Its subcellular location is the host cytoplasm. It is found in the virion. Its function is as follows. Cysteine protease that plays several role during infection including processing of the structural polyprotein or inhibition of the host immune response. Catalyzes the maturation of the pp220 and pp62 polyprotein precursors into core-shell proteins. Plays a role in the disruption of host pyroptosis via specific cleavage of gasdermin D/GSDMD. In addition, strongly decreases the host cGAS-STING signaling by targeting IKBKE via its enzymatic activity. Also impairs host FOXJ1-mediated antiviral effect via degradation of FOXJ1. This chain is SUMO-1 cysteine protease S273R, found in Ornithodoros (relapsing fever ticks).